The following is a 635-amino-acid chain: Early transcription factor 70 kDa subunit (635 aa).

A Helicase ATP-binding domain is found at 32 to 185; it reads RSIIDENKSV…SNIISLMSDE (154 aa). 45-52 lines the ATP pocket; sequence HIMGSGKT. A DEXH box motif is present at residues 135 to 138; the sequence is DEAH. The region spanning 326 to 505 is the Helicase C-terminal domain; sequence KFKYFITKIE…TLPFDIKKLL (180 aa).

It belongs to the helicase family. VETF subfamily. As to quaternary structure, heterodimer of a 70 kDa and a 82 kDa subunit. Part of the early transcription complex composed of ETF, RAP94, and the DNA-directed RNA polymerase.

It localises to the virion. Acts with RNA polymerase to initiate transcription from early gene promoters. Is recruited by the RPO-associated protein of 94 kDa (RAP94) to form the early transcription complex, which also contains the core RNA polymerase. ETF heterodimer binds to early gene promoters. The polypeptide is Early transcription factor 70 kDa subunit (VETFS) (Oryctolagus cuniculus (Rabbit)).